A 70-amino-acid chain; its full sequence is DNA-directed RNA polymerase subunit omega (70 aa).

Belongs to the RNA polymerase subunit omega family. The RNAP catalytic core consists of 2 alpha, 1 beta, 1 beta' and 1 omega subunit. When a sigma factor is associated with the core the holoenzyme is formed, which can initiate transcription.

It carries out the reaction RNA(n) + a ribonucleoside 5'-triphosphate = RNA(n+1) + diphosphate. Its function is as follows. Promotes RNA polymerase assembly. Latches the N- and C-terminal regions of the beta' subunit thereby facilitating its interaction with the beta and alpha subunits. The chain is DNA-directed RNA polymerase subunit omega from Pelobacter propionicus (strain DSM 2379 / NBRC 103807 / OttBd1).